The chain runs to 279 residues: MSVRKLKPITPGQRFRVVNGYDAITTDKPEKSLLAPIKKSGGRNSQGKMTMRYKGGGHKKRYRVIDFKRDKQGIPATVASIEYDPNRTAFIALLNYQDGEKRYIIAQNGLQVDQNVVSSNEAATPEIGNAMPLANIPLGTVISCIELRPGQGAVMARSAGAFAQLLAREGKYATIKLPSGEIRRVLALCMATIGAVSNSDHQLMIGGKAGRSRWLGIRPRTRPVAMNPVDHPMGGGEGRASGGHPRSRKGLPAKGFKTRSRTKASNKYIVERRKTRKKK.

The interval 223–279 (PVAMNPVDHPMGGGEGRASGGHPRSRKGLPAKGFKTRSRTKASNKYIVERRKTRKKK) is disordered. The segment covering 245–264 (PRSRKGLPAKGFKTRSRTKA) has biased composition (basic residues).

It belongs to the universal ribosomal protein uL2 family. In terms of assembly, part of the 50S ribosomal subunit. Forms a bridge to the 30S subunit in the 70S ribosome.

Its function is as follows. One of the primary rRNA binding proteins. Required for association of the 30S and 50S subunits to form the 70S ribosome, for tRNA binding and peptide bond formation. It has been suggested to have peptidyltransferase activity; this is somewhat controversial. Makes several contacts with the 16S rRNA in the 70S ribosome. The protein is Large ribosomal subunit protein uL2 of Christiangramia forsetii (strain DSM 17595 / CGMCC 1.15422 / KT0803) (Gramella forsetii).